The following is a 450-amino-acid chain: Protein phosphatase 1F (450 aa).

A PPM-type phosphatase domain is found at 152–409; it reads LVSIHAIRNT…DNITVMVVFL (258 aa). Residues Asp194, Gly195, Asp356, and Asp400 each contribute to the Mn(2+) site. The segment at 420–450 is disordered; that stretch reads GQGAGGAQADVGSQDLSTGLSELEINTSQRS. The span at 433 to 450 shows a compositional bias: polar residues; it reads QDLSTGLSELEINTSQRS. Ser450 carries the post-translational modification Phosphoserine.

It belongs to the PP2C family. Associates with FEM1B. Mg(2+) is required as a cofactor. Requires Mn(2+) as cofactor.

It catalyses the reaction O-phospho-L-seryl-[protein] + H2O = L-seryl-[protein] + phosphate. The enzyme catalyses O-phospho-L-threonyl-[protein] + H2O = L-threonyl-[protein] + phosphate. Its function is as follows. Dephosphorylates and concomitantly deactivates CaM-kinase II activated upon autophosphorylation, and CaM-kinases IV and I activated upon phosphorylation by CaM-kinase kinase. Promotes apoptosis. The protein is Protein phosphatase 1F (Ppm1f) of Rattus norvegicus (Rat).